Consider the following 300-residue polypeptide: Cation-efflux pump FieF (300 aa).

4 helical membrane passes run 11 to 31 (LAAV…VFAW), 40 to 60 (LASL…LLVV), 81 to 101 (LAAL…ILTG), and 114 to 134 (PEVG…LVSF). The Zn(2+) site is built by D45 and D49. Residues H153 and D157 each contribute to the Zn(2+) site. 2 consecutive transmembrane segments (helical) span residues 156–176 (SDLL…KGIT) and 182–202 (FALG…YDAV).

This sequence belongs to the cation diffusion facilitator (CDF) transporter (TC 2.A.4) family. FieF subfamily. As to quaternary structure, homodimer.

Its subcellular location is the cell inner membrane. The catalysed reaction is Zn(2+)(in) + H(+)(out) = Zn(2+)(out) + H(+)(in). It carries out the reaction Cd(2+)(in) + H(+)(out) = Cd(2+)(out) + H(+)(in). It catalyses the reaction Fe(2+)(in) + H(+)(out) = Fe(2+)(out) + H(+)(in). Divalent metal cation transporter which exports Zn(2+), Cd(2+) and possibly Fe(2+). May be involved in zinc and iron detoxification by efflux. The sequence is that of Cation-efflux pump FieF from Pectobacterium atrosepticum (strain SCRI 1043 / ATCC BAA-672) (Erwinia carotovora subsp. atroseptica).